Reading from the N-terminus, the 426-residue chain is Glutamate-1-semialdehyde 2,1-aminomutase (426 aa).

Residue K265 is modified to N6-(pyridoxal phosphate)lysine.

It belongs to the class-III pyridoxal-phosphate-dependent aminotransferase family. HemL subfamily. In terms of assembly, homodimer. It depends on pyridoxal 5'-phosphate as a cofactor.

It is found in the cytoplasm. It catalyses the reaction (S)-4-amino-5-oxopentanoate = 5-aminolevulinate. It functions in the pathway porphyrin-containing compound metabolism; protoporphyrin-IX biosynthesis; 5-aminolevulinate from L-glutamyl-tRNA(Glu): step 2/2. This chain is Glutamate-1-semialdehyde 2,1-aminomutase, found in Cronobacter sakazakii (strain ATCC BAA-894) (Enterobacter sakazakii).